A 227-amino-acid chain; its full sequence is Ribose-5-phosphate isomerase A (227 aa).

Residues 30-33, 86-89, and 99-104 each bind substrate; these read TGST, DGAD, and KGMGGA. The Proton acceptor role is filled by glutamate 108. Position 126 (lysine 126) interacts with substrate.

It belongs to the ribose 5-phosphate isomerase family. Homodimer.

It catalyses the reaction aldehydo-D-ribose 5-phosphate = D-ribulose 5-phosphate. It participates in carbohydrate degradation; pentose phosphate pathway; D-ribose 5-phosphate from D-ribulose 5-phosphate (non-oxidative stage): step 1/1. Functionally, involved in the first step of the non-oxidative branch of the pentose phosphate pathway. It catalyzes the reversible conversion of ribose-5-phosphate to ribulose 5-phosphate. Can also act on D-ribose-5-diphosphate and D-ribose-5-triphosphate as substrate. This is Ribose-5-phosphate isomerase A from Thermus thermophilus (strain ATCC BAA-163 / DSM 7039 / HB27).